A 328-amino-acid chain; its full sequence is DNA-directed RNA polymerase subunit alpha (328 aa).

An alpha N-terminal domain (alpha-NTD) region spans residues 1–230 (MNKIKITPSV…QSQMEIFTND (230 aa)). The alpha C-terminal domain (alpha-CTD) stretch occupies residues 243-328 (NSEIFYQPLD…ILKKIEQNKS (86 aa)).

Belongs to the RNA polymerase alpha chain family. As to quaternary structure, homodimer. The RNAP catalytic core consists of 2 alpha, 1 beta, 1 beta' and 1 omega subunit. When a sigma factor is associated with the core the holoenzyme is formed, which can initiate transcription.

It carries out the reaction RNA(n) + a ribonucleoside 5'-triphosphate = RNA(n+1) + diphosphate. DNA-dependent RNA polymerase catalyzes the transcription of DNA into RNA using the four ribonucleoside triphosphates as substrates. In Nitratiruptor sp. (strain SB155-2), this protein is DNA-directed RNA polymerase subunit alpha.